We begin with the raw amino-acid sequence, 573 residues long: Potassium-transporting ATPase potassium-binding subunit (573 aa).

10 helical membrane passes run 6 to 26, 66 to 86, 135 to 155, 177 to 197, 257 to 277, 283 to 303, 382 to 402, 428 to 448, 493 to 513, and 537 to 557; these read ILFA…GSYI, FFSL…ILLL, ALAV…IALI, VFWI…FQGV, IQMV…GKWV, GWLI…VMTI, IFGG…LAVF, MFAL…AAVI, ITIA…VIML, and FIFA…TIFP.

The protein belongs to the KdpA family. The system is composed of three essential subunits: KdpA, KdpB and KdpC.

The protein localises to the cell inner membrane. Its function is as follows. Part of the high-affinity ATP-driven potassium transport (or Kdp) system, which catalyzes the hydrolysis of ATP coupled with the electrogenic transport of potassium into the cytoplasm. This subunit binds the periplasmic potassium ions and delivers the ions to the membrane domain of KdpB through an intramembrane tunnel. This chain is Potassium-transporting ATPase potassium-binding subunit, found in Francisella tularensis subsp. holarctica (strain FTNF002-00 / FTA).